The following is a 358-amino-acid chain: Malate dehydrogenase 2, glyoxysomal (358 aa).

The transit peptide at 1–38 (MEFRGDANKRIAMISAHLQPSFTPQMEAKNSVMGRENC) directs the protein to the glyoxysome. Residues 53 to 59 (GAAGGIG) and Asp-79 contribute to the NAD(+) site. 2 residues coordinate substrate: Arg-126 and Arg-132. Residues Asn-139 and 162 to 164 (ISN) contribute to the NAD(+) site. Substrate contacts are provided by Asn-164 and Arg-198. His-222 (proton acceptor) is an active-site residue. Position 273 (Met-273) interacts with NAD(+).

Belongs to the LDH/MDH superfamily. MDH type 1 family. As to quaternary structure, homodimer.

It localises to the glyoxysome. It catalyses the reaction (S)-malate + NAD(+) = oxaloacetate + NADH + H(+). The sequence is that of Malate dehydrogenase 2, glyoxysomal (MDH2) from Brassica napus (Rape).